The sequence spans 837 residues: Translation initiation factor IF-2 (837 aa).

The tract at residues 94–252 is disordered; that stretch reads QRSPEEIEAE…NAHGFQSPTG (159 aa). Residues 96 to 136 show a composition bias toward basic and acidic residues; it reads SPEEIEAERKRELDERRAVENAARQKAEEEARVRAEEEARR. The segment covering 137–171 has biased composition (low complexity); it reads QPAAPSAPAEAVAAPAPVAEPVREAAPVVAAAPAA. 2 stretches are compositionally biased toward basic and acidic residues: residues 172-213 and 221-230; these read DTRK…EKAP and TTDEESDGFR. The span at 231 to 244 shows a compositional bias: basic residues; it reads RGGRGKAKLKKRNA. A tr-type G domain is found at 337–506; that stretch reads PRAPVVTVMG…LLQAEVLELT (170 aa). The segment at 346 to 353 is G1; it reads GHVDHGKT. GTP is bound at residue 346-353; the sequence is GHVDHGKT. Positions 371 to 375 are G2; the sequence is GITQH. The tract at residues 392 to 395 is G3; that stretch reads DTPG. Residues 392–396 and 446–449 each bind GTP; these read DTPGH and NKID. The interval 446–449 is G4; sequence NKID. The segment at 482-484 is G5; sequence SAK.

Belongs to the TRAFAC class translation factor GTPase superfamily. Classic translation factor GTPase family. IF-2 subfamily.

The protein localises to the cytoplasm. Its function is as follows. One of the essential components for the initiation of protein synthesis. Protects formylmethionyl-tRNA from spontaneous hydrolysis and promotes its binding to the 30S ribosomal subunits. Also involved in the hydrolysis of GTP during the formation of the 70S ribosomal complex. This is Translation initiation factor IF-2 from Pseudomonas fluorescens (strain Pf0-1).